The following is a 1047-amino-acid chain: MMAAEAGSEEGGPVTAGAGGGGAAAGSSAYPAVCRVKIPAALPVAAAPYPGLVETGVAGTLGGGAALGSEFLGAGSVAGALGGAGLTGGGTAAGVAGAAAGVAGAAVAGPSGDMALTKLPTSLLAETLGPGGGFPPLPPPPYLPPLGAGLGTVDEGDSLDGPEYEEEEVAIPLTAPPTNQWYHGKLDRTIAEERLRQAGKSGSYLIRESDRRPGSFVLSFLSQMNVVNHFRIIAMCGDYYIGGRRFSSLSDLIGYYSHVSCLLKGEKLLYPVAPPEPVEDRRRVRAILPYTKVPDTDEISFLKGDMFIVHNELEDGWMWVTNLRTDEQGLIVEDLVEEVGREEDPHEGKIWFHGKISKQEAYNLLMTVGQVCSFLVRPSDNTPGDYSLYFRTNENIQRFKICPTPNNQFMMGGRYYNSIGDIIDHYRKEQIVEGYYLKEPVPMQDQEQVLNDTVDGKEIYNTIRRKTKDAFYKNIVKKGYLLKKGKGKRWKNLYFILEGSDAQLIYFESEKRATKPKGLIDLSVCSVYVVHDSLFGRPNCFQIVVQHFSEEHYIFYFAGETPEQAEDWMKGLQAFCNLRKSSPGTSNKRLRQVSSLVLHIEEAHKLPVKHFTNPYCNIYLNSVQVAKTHAREGQNPVWSEEFVFDDLPPDINRFEITLSNKTKKSKDPDILFMRCQLSRLQKGHATDEWFLLSSHIPLKGIEPGSLRVRARYSMEKIMPEEEYSEFKELILQKELHVVYALSHVCGQDRTLLASILLRIFLHEKLESLLLCTLNDREISMEDEATTLFRATTLASTLMEQYMKATATQFVHHALKDSILKIMESKQSCELSPSKLEKNEDVNTNLTHLLNILSELVEKIFMASEILPPTLRYIYGCLQKSVQHKWPTNTTMRTRVVSGFVFLRLICPAILNPRMFNIISDSPSPIAARTLILVAKSVQNLANLVEFGAKEPYMEGVNPFIKSNKHRMIMFLDELGNVPELPDTTEHSRTDLSRDLAALHEICVAHSDELRTLSNERGAQQHVLKKLLAITELLQQKQNQYTKTNDVR.

M1 carries the post-translational modification N-acetylmethionine. The 92-residue stretch at 181-272 folds into the SH2 1 domain; it reads WYHGKLDRTI…LKGEKLLYPV (92 aa). Residues 279–341 enclose the SH3 domain; the sequence is EDRRRVRAIL…VEDLVEEVGR (63 aa). The 91-residue stretch at 351 to 441 folds into the SH2 2 domain; sequence WFHGKISKQE…VEGYYLKEPV (91 aa). Residues 474 to 577 form the PH domain; it reads NIVKKGYLLK…WMKGLQAFCN (104 aa). A C2 domain is found at 577-690; that stretch reads NLRKSSPGTS…QKGHATDEWF (114 aa). Y615 bears the Phosphotyrosine mark. In terms of domain architecture, Ras-GAP spans 764–974; it reads KLESLLLCTL…HRMIMFLDEL (211 aa). Phosphoserine is present on S831.

As to quaternary structure, interacts with SQSTM1. Interacts with SPSB1; the interaction does not promote degradation. Interacts with CAV2 (tyrosine phosphorylated form). Directly interacts with NCK1. Interacts with PDGFRB (tyrosine phosphorylated). Interacts (via SH2 domain) with the 'Tyr-9' phosphorylated form of PDPK1. Interacts with tyrosine-phosphorylated EPHB4. In terms of processing, the N-terminus is blocked. Post-translationally, phosphorylated by SRC and LCK. The phosphorylation SRC inhibits its ability to stimulate the Ras-GTPase activity, whereas phosphorylation by LCK does not display any effect on stimulation activity. As to expression, in placental villi, detected only in the trophoblast layer (cytotrophoblast and syncytiotrophoblast). Not detected in stromal, endothelial or Hofbauer cells (at protein level).

The protein localises to the cytoplasm. Its function is as follows. Inhibitory regulator of the Ras-cyclic AMP pathway. Stimulates the GTPase of normal but not oncogenic Ras p21; this stimulation may be further increased in the presence of NCK1. The protein is Ras GTPase-activating protein 1 (RASA1) of Homo sapiens (Human).